The primary structure comprises 132 residues: Large ribosomal subunit protein bL12 (132 aa).

The disordered stretch occupies residues 112 to 132 (KEAADKAKTQLEGAGGTINLK).

This sequence belongs to the bacterial ribosomal protein bL12 family. In terms of assembly, homodimer. Part of the ribosomal stalk of the 50S ribosomal subunit. Forms a multimeric L10(L12)X complex, where L10 forms an elongated spine to which 2 to 4 L12 dimers bind in a sequential fashion. Binds GTP-bound translation factors.

Its function is as follows. Forms part of the ribosomal stalk which helps the ribosome interact with GTP-bound translation factors. Is thus essential for accurate translation. The polypeptide is Large ribosomal subunit protein bL12 (Leifsonia xyli subsp. xyli (strain CTCB07)).